We begin with the raw amino-acid sequence, 175 residues long: ATP synthase subunit b, chloroplastic (175 aa).

The helical transmembrane segment at 24–46 (VLNLAVVLAIVLTYVGDALRGLL) threads the bilayer.

The protein belongs to the ATPase B chain family. As to quaternary structure, F-type ATPases have 2 components, F(1) - the catalytic core - and F(0) - the membrane proton channel. F(1) has five subunits: alpha(3), beta(3), gamma(1), delta(1), epsilon(1). F(0) has four main subunits: a(1), b(1), b'(1) and c(10-14). The alpha and beta chains form an alternating ring which encloses part of the gamma chain. F(1) is attached to F(0) by a central stalk formed by the gamma and epsilon chains, while a peripheral stalk is formed by the delta, b and b' chains.

The protein resides in the plastid. The protein localises to the chloroplast thylakoid membrane. In terms of biological role, f(1)F(0) ATP synthase produces ATP from ADP in the presence of a proton or sodium gradient. F-type ATPases consist of two structural domains, F(1) containing the extramembraneous catalytic core and F(0) containing the membrane proton channel, linked together by a central stalk and a peripheral stalk. During catalysis, ATP synthesis in the catalytic domain of F(1) is coupled via a rotary mechanism of the central stalk subunits to proton translocation. Component of the F(0) channel, it forms part of the peripheral stalk, linking F(1) to F(0). The protein is ATP synthase subunit b, chloroplastic of Chlorella vulgaris (Green alga).